We begin with the raw amino-acid sequence, 769 residues long: Serine protease HtrA-like (769 aa).

A compositionally biased stretch (basic residues) spans Met-1–Glu-20. Positions Met-1 to Ala-390 are disordered. Basic and acidic residues-rich tracts occupy residues Phe-21–Lys-64 and Leu-71–Lys-108. Over residues Tyr-126 to Lys-137 the composition is skewed to polar residues. A compositionally biased stretch (basic and acidic residues) spans Ser-138 to Ser-186. The span at Gln-247–Ser-262 shows a compositional bias: polar residues. Composition is skewed to basic and acidic residues over residues Gln-264–Asp-296 and Lys-310–Asn-330. The span at Ala-331–His-347 shows a compositional bias: polar residues. Over residues Arg-348–Asn-364 the composition is skewed to basic and acidic residues. The segment covering Gly-365 to Ala-390 has biased composition (polar residues). The chain crosses the membrane as a helical span at residues Leu-410 to Val-430. Active-site charge relay system residues include His-504, Asp-534, and Ser-619. Residues Ile-680–Asp-733 form the PDZ domain.

It belongs to the peptidase S1C family.

Its subcellular location is the cell membrane. The polypeptide is Serine protease HtrA-like (Staphylococcus aureus (strain NCTC 8325 / PS 47)).